The sequence spans 889 residues: DNA mismatch repair protein MutS (889 aa).

ATP is bound at residue 622–629 (GPNMAGKS). Residues 869-889 (QRVKRPEKAPADVTAETEDQE) form a disordered region.

This sequence belongs to the DNA mismatch repair MutS family.

In terms of biological role, this protein is involved in the repair of mismatches in DNA. It is possible that it carries out the mismatch recognition step. This protein has a weak ATPase activity. The chain is DNA mismatch repair protein MutS from Desulfatibacillum aliphaticivorans.